We begin with the raw amino-acid sequence, 179 residues long: MDLSFIIVQILSASYNNDVTALYTLINAYNSVDDTTRWAAINDPQAEVNVVKAYVATTATTELHRTILIDSIDSAFAYDQVGCLVGIARGLLRHSEDVLEVIKSMELFEVCRGKRGSKRYLGYLSDQCTNKYMMLTQAGLAAVEGADILRTNHLVSGNKFSPNFGIARMLLLTLCCGAL.

In Vitis vinifera (Grape), this protein is Protein P20B.